Here is a 210-residue protein sequence, read N- to C-terminus: Thymidylate kinase (210 aa).

10 to 17 (GLEGAGKS) is an ATP binding site.

It belongs to the thymidylate kinase family.

It catalyses the reaction dTMP + ATP = dTDP + ADP. Its function is as follows. Phosphorylation of dTMP to form dTDP in both de novo and salvage pathways of dTTP synthesis. The chain is Thymidylate kinase (tmk) from Haemophilus influenzae (strain ATCC 51907 / DSM 11121 / KW20 / Rd).